Consider the following 124-residue polypeptide: Fluoride-specific ion channel FluC (124 aa).

The next 4 membrane-spanning stretches (helical) occupy residues 3–23 (VLLI…VSNL), 34–54 (IGTL…FIFI), 68–88 (LLLI…IETF), and 100–120 (ALNV…GVLI). The Na(+) site is built by Gly75 and Thr78.

It belongs to the fluoride channel Fluc/FEX (TC 1.A.43) family.

The protein localises to the cell inner membrane. It carries out the reaction fluoride(in) = fluoride(out). With respect to regulation, na(+) is not transported, but it plays an essential structural role and its presence is essential for fluoride channel function. Functionally, fluoride-specific ion channel. Important for reducing fluoride concentration in the cell, thus reducing its toxicity. The polypeptide is Fluoride-specific ion channel FluC (Coxiella burnetii (strain CbuK_Q154) (Coxiella burnetii (strain Q154))).